The sequence spans 241 residues: Orotidine 5'-phosphate decarboxylase (241 aa).

Substrate is bound by residues Asp-15, Lys-37, 64–73 (DLKYHDIPNT), Thr-126, Arg-187, Gln-196, Gly-216, and Arg-217. Lys-66 (proton donor) is an active-site residue.

Belongs to the OMP decarboxylase family. Type 1 subfamily. As to quaternary structure, homodimer.

It carries out the reaction orotidine 5'-phosphate + H(+) = UMP + CO2. It participates in pyrimidine metabolism; UMP biosynthesis via de novo pathway; UMP from orotate: step 2/2. Catalyzes the decarboxylation of orotidine 5'-monophosphate (OMP) to uridine 5'-monophosphate (UMP). This is Orotidine 5'-phosphate decarboxylase from Trichlorobacter lovleyi (strain ATCC BAA-1151 / DSM 17278 / SZ) (Geobacter lovleyi).